A 350-amino-acid chain; its full sequence is Dihydroorotase (350 aa).

Histidine 17 and histidine 19 together coordinate Zn(2+). Substrate contacts are provided by residues 19 to 21 (HFR) and asparagine 45. The Zn(2+) site is built by lysine 103, histidine 140, and histidine 178. N6-carboxylysine is present on lysine 103. Histidine 140 serves as a coordination point for substrate. Position 223 (leucine 223) interacts with substrate. Aspartate 251 lines the Zn(2+) pocket. Aspartate 251 is an active-site residue. Substrate contacts are provided by histidine 255 and alanine 267.

The protein belongs to the metallo-dependent hydrolases superfamily. DHOase family. Class II DHOase subfamily. As to quaternary structure, homodimer. Requires Zn(2+) as cofactor.

The enzyme catalyses (S)-dihydroorotate + H2O = N-carbamoyl-L-aspartate + H(+). It participates in pyrimidine metabolism; UMP biosynthesis via de novo pathway; (S)-dihydroorotate from bicarbonate: step 3/3. Functionally, catalyzes the reversible cyclization of carbamoyl aspartate to dihydroorotate. The polypeptide is Dihydroorotase (Photorhabdus laumondii subsp. laumondii (strain DSM 15139 / CIP 105565 / TT01) (Photorhabdus luminescens subsp. laumondii)).